The chain runs to 172 residues: Small ribosomal subunit protein uS5 (172 aa).

The 64-residue stretch at 16–79 (LKDRLVAINR…ESAKKNLVKV (64 aa)) folds into the S5 DRBM domain.

This sequence belongs to the universal ribosomal protein uS5 family. As to quaternary structure, part of the 30S ribosomal subunit. Contacts proteins S4 and S8.

With S4 and S12 plays an important role in translational accuracy. Functionally, located at the back of the 30S subunit body where it stabilizes the conformation of the head with respect to the body. This is Small ribosomal subunit protein uS5 from Bacteroides thetaiotaomicron (strain ATCC 29148 / DSM 2079 / JCM 5827 / CCUG 10774 / NCTC 10582 / VPI-5482 / E50).